Here is a 366-residue protein sequence, read N- to C-terminus: ERCC4 domain-containing protein EP364R (366 aa).

The ERCC4 domain maps to 3–101 (FLVADHREHH…QLYFFVEGPA (99 aa)). Composition is skewed to polar residues over residues 320–331 (RPTMQVATQPAA) and 349–366 (PTGH…TVRC). The disordered stretch occupies residues 320–366 (RPTMQVATQPAATQPLHKVSDDASSDASSPTGHQTLSKEMSLNTVRC).

The protein belongs to the asfivirus EP364R family.

Plays a role in the inhibition of type I interferon signaling pathway. Mechanistically, specifically interacts with 2',3'-cGAMP and cleaves it via its phosphodiesterase activity. In turn, prevents 2',3'-cGAMP interaction with host ER-resident STING1 leading to inhibition of downstream signaling pathway and type I interferon production. The chain is ERCC4 domain-containing protein EP364R from Ornithodoros (relapsing fever ticks).